The chain runs to 86 residues: Small ribosomal subunit protein bS20 (86 aa).

Residues 1–27 show a composition bias toward basic residues; it reads MANSKSAKKRAIQAEKRRQHNASRRSM. The segment at 1 to 28 is disordered; it reads MANSKSAKKRAIQAEKRRQHNASRRSMM.

It belongs to the bacterial ribosomal protein bS20 family.

In terms of biological role, binds directly to 16S ribosomal RNA. The polypeptide is Small ribosomal subunit protein bS20 (Vibrio parahaemolyticus serotype O3:K6 (strain RIMD 2210633)).